The chain runs to 266 residues: MDARSLSGILTEVREKRPLVHHITNYVTVNDCANVTLCIGAAPVMAHAHDEVAEMVAMAGALVLNIGTLDHRQVESMLAAGHRANELNIPIILDPVGAGATRLRTETAKTLLHKLHVSVLKGNAGEIATLAGAEGKVRGVDSAGVSGDPAEFARGLAEKLGLVVAVSGATDIVTDGKRLIYVDNGHEMMGKLSGTGCMASSISGAFAAASKDYVTSTAAALASFGVAGEKAAKRCEGPASFKIALLDEIYRLTADEVAHNIKVRFA.

Methionine 45 contributes to the substrate binding site. ATP is bound by residues lysine 121 and serine 167. Glycine 194 contacts substrate.

Belongs to the Thz kinase family. Requires Mg(2+) as cofactor.

It carries out the reaction 5-(2-hydroxyethyl)-4-methylthiazole + ATP = 4-methyl-5-(2-phosphooxyethyl)-thiazole + ADP + H(+). It participates in cofactor biosynthesis; thiamine diphosphate biosynthesis; 4-methyl-5-(2-phosphoethyl)-thiazole from 5-(2-hydroxyethyl)-4-methylthiazole: step 1/1. Functionally, catalyzes the phosphorylation of the hydroxyl group of 4-methyl-5-beta-hydroxyethylthiazole (THZ). The sequence is that of Hydroxyethylthiazole kinase from Methanocella arvoryzae (strain DSM 22066 / NBRC 105507 / MRE50).